The chain runs to 457 residues: tRNA-2-methylthio-N(6)-dimethylallyladenosine synthase (457 aa).

Residues 3–120 (KKVYVKTFGC…LPQMIDARRE (118 aa)) form the MTTase N-terminal domain. [4Fe-4S] cluster contacts are provided by Cys-12, Cys-49, Cys-83, Cys-157, Cys-161, and Cys-164. Residues 143–377 (RVEGPSAFVS…QATIEENVAR (235 aa)) form the Radical SAM core domain. In terms of domain architecture, TRAM spans 380 to 447 (QSMVGKVERI…PHSLRGELVL (68 aa)).

It belongs to the methylthiotransferase family. MiaB subfamily. Monomer. The cofactor is [4Fe-4S] cluster.

It is found in the cytoplasm. It carries out the reaction N(6)-dimethylallyladenosine(37) in tRNA + (sulfur carrier)-SH + AH2 + 2 S-adenosyl-L-methionine = 2-methylsulfanyl-N(6)-dimethylallyladenosine(37) in tRNA + (sulfur carrier)-H + 5'-deoxyadenosine + L-methionine + A + S-adenosyl-L-homocysteine + 2 H(+). Functionally, catalyzes the methylthiolation of N6-(dimethylallyl)adenosine (i(6)A), leading to the formation of 2-methylthio-N6-(dimethylallyl)adenosine (ms(2)i(6)A) at position 37 in tRNAs that read codons beginning with uridine. The chain is tRNA-2-methylthio-N(6)-dimethylallyladenosine synthase from Burkholderia lata (strain ATCC 17760 / DSM 23089 / LMG 22485 / NCIMB 9086 / R18194 / 383).